We begin with the raw amino-acid sequence, 519 residues long: MLQMKQPLQNLNQSQKTALAGVFVLLFPILYPNLFSPLGRASPSLFSEWNAPRPRHLSLLQGALDRQISIRQQVELWSPLADQGWKPCTESYRGASLPEKSEGFLQVFLDGGLNQQRMGICDAVAVAKIMNVTLVIPRLEVNTVWQDSSSFTDIFDLDHFISVLKDEVRIVRELPIQYAWSTRDYYATGIRATRIKTAPVHASAEWYLENVLPIIQSYGIAAVAPFSHRLAFDNLPESIQRLRCKVNFEALNFVPHIRELGDALVHRLRNPPSSSQTSGTMDPTDRINTIVKAGAGKFAVLHLRFDKDMAAHSGCDFEGGKAEKLALAKYRQVIWQGRVLNSQFTDEELRNKGRCPLTPEEIGLLLSALGFSNNTRLYLASHQVYGGEARISTLRKLFPGIENKKSLASAEELADVQGKASLMAAVDYYVSMKSDIFISASPGNMHNALQAHRAYLNLKTIRPNMILLGQVFVNKSLDWSEFEGAVMNGHKNRQGQLRLRKQKQSIYTYPAPDCMCKVA.

A helical; Signal-anchor for type II membrane protein membrane pass occupies residues 18–38 (ALAGVFVLLFPILYPNLFSPL). N-linked (GlcNAc...) asparagine glycosylation occurs at N131. 302–304 (HLR) is a substrate binding site. N373 and N474 each carry an N-linked (GlcNAc...) asparagine glycan.

Belongs to the glycosyltransferase GT106 family.

Its subcellular location is the membrane. The protein operates within glycan metabolism. This Arabidopsis thaliana (Mouse-ear cress) protein is O-fucosyltransferase 31.